Consider the following 255-residue polypeptide: tRNA1(Val) (adenine(37)-N6)-methyltransferase (255 aa).

It belongs to the methyltransferase superfamily. tRNA (adenine-N(6)-)-methyltransferase family.

The protein resides in the cytoplasm. It catalyses the reaction adenosine(37) in tRNA1(Val) + S-adenosyl-L-methionine = N(6)-methyladenosine(37) in tRNA1(Val) + S-adenosyl-L-homocysteine + H(+). Its function is as follows. Specifically methylates the adenine in position 37 of tRNA(1)(Val) (anticodon cmo5UAC). The sequence is that of tRNA1(Val) (adenine(37)-N6)-methyltransferase from Porphyromonas gingivalis (strain ATCC BAA-308 / W83).